A 1187-amino-acid polypeptide reads, in one-letter code: MATESTTNTTTIIARADQHDIDLHKASDRVNFGSIKEPIDVPYLLGVQTDSFDWLIGSDRWKARVEEDEKNGTNTVAHTSGLDEVFNEISPIENFAQTMSLTFSDPYFEEPRHTVQECKEKDYTYSAPLYVNAEFENGDTGEIKSQTVFMGDFPLQTPHGTFIIGGTERVIVSQLVRSPGVYFDRQQDRTSDKEVFGAKIIPSRGAWLEFEIDKKDQPQVRVDRKRKQSAIVFLMAIGMTKSEIAQAFKDYPLVLDALEKETLETQDEALVDLYRKIRPADTPTPEAGKNLLDSFYFNTKRYDLARVGRYKINRKLGVEADFNDRSLHQEDIIATIKYLVALHDGAATFPGKRNGEDVDLRVDVDDIDHFGNRRIRQVGELIQNQLRTGLSRMERVVRERMTTQDAEAITPQSLINIRPVNATIKEFFGTSQLSQFMDQNNPLSGVTNKRRLSALGPGGLSRDRASMEVRDVHPSHFGRMCPIESPEGPNIGLIGSLATFGRVNPFGFIETPYRKVVNGHVTDEVEYMTADRDLDHVIAQANQELDENGNFVSKSALARVGEEEAVDVPVSSVDYMDVSPRQMVSLGASLIPFLEHDEGHRALMGTNMQRQAVPLIESERPLVGTGSEWRAANDSGDVIKSEKDGVVTYVSADLIRVMNDDGTTSSYKLAKFQRSNQTTCYNQRPIIHDGERVEAGSVLADGPAIQKGDLALGKNLLIAFMPWNGYNYEDAVIISQRLVQDDTLSSIHIEEYEIDARETKLGAEEITRDLPNVGEDAVANLDERGIIRIGAEVEAGDILVGKVTPKGETELTPEERLLRAIFGEKSREVRDTSLRVPHGETGTVIGVKEITREDAEEDGDELPNGVNQMIRVYIAQHRKITVGDKLSGRHGNKGCISRILPEEDMPFLADGTPVDIMLNPLGVPSRMNLGQVLELHLGWIAHSGWDISLDPNMEAEWKKLVPSGAEKAEPNTPVATPVFDGVKPEVLKGLLSTTLPNRDGDRLVGPDGKATLFDGRTGEPYTKPISVGYMYMLKLHHLVDDKIHARSTGPYSMITQQPLGGKAQFGGQRFGEMEVWALEAYGAAYTLHEMMTTKSDDVDGRVRVYGAIVKGDNLPPAGIPESFKVLLKEMQSLSLNVEVLNAEGVAIDMKDEDDDPASSADDLGFNIGARPDAAAKEDQKAEEPEYQ.

The tract at residues 1150–1187 (KDEDDDPASSADDLGFNIGARPDAAAKEDQKAEEPEYQ) is disordered. A compositionally biased stretch (basic and acidic residues) spans 1173–1187 (AAAKEDQKAEEPEYQ).

Belongs to the RNA polymerase beta chain family. As to quaternary structure, the RNAP catalytic core consists of 2 alpha, 1 beta, 1 beta' and 1 omega subunit. When a sigma factor is associated with the core the holoenzyme is formed, which can initiate transcription.

It catalyses the reaction RNA(n) + a ribonucleoside 5'-triphosphate = RNA(n+1) + diphosphate. Functionally, DNA-dependent RNA polymerase catalyzes the transcription of DNA into RNA using the four ribonucleoside triphosphates as substrates. This Bifidobacterium longum subsp. infantis (strain ATCC 15697 / DSM 20088 / JCM 1222 / NCTC 11817 / S12) protein is DNA-directed RNA polymerase subunit beta.